Reading from the N-terminus, the 1136-residue chain is Probable LRR receptor-like serine/threonine-protein kinase At4g36180 (1136 aa).

The signal sequence occupies residues 1–22 (MAMDISLFFIFLVIYAPLVSYA). The Extracellular segment spans residues 23 to 751 (DESQAEIDAL…TAEGKKKKRK (729 aa)). 8 LRR repeats span residues 93–115 (MLRK…LAYC), 117–139 (RLLS…MRNL), 141–162 (SLEV…GLPS), 163–186 (SLQF…ANLT), 187–210 (QLQL…GNLQ), 211–233 (SLQY…ISNC), 235–256 (SLVH…AYGA), and 259–280 (KLEV…SLFC). Asparagine 105 and asparagine 138 each carry an N-linked (GlcNAc...) asparagine glycan. N-linked (GlcNAc...) asparagine glycosylation is found at asparagine 184, asparagine 192, and asparagine 232. 2 N-linked (GlcNAc...) asparagine glycosylation sites follow: asparagine 269 and asparagine 281. LRR repeat units lie at residues 283–304 (SLTI…ETTA), 309–330 (GLQV…WLTN), 333–355 (SLKN…IGNL), 357–379 (RLEE…IKQC), 381–403 (SLDV…LGYM), 405–426 (ALKV…SMVN), 429–452 (QLER…MALT), 453–479 (SLSE…SNLS), 480–500 (FLNL…GNLF), 501–524 (KLTA…SGLP), 525–546 (NVQV…GFSS), 549–571 (SLRY…FGFL), 573–595 (LLVS…IGNC), 597–620 (ALEV…SRLP), 621–643 (RLKV…ISQS), 645–666 (SLNS…SFSG), 669–691 (NLTK…LALI), and 694–716 (NLVY…LGSR). N-linked (GlcNAc...) asparagine glycosylation occurs at asparagine 365. N-linked (GlcNAc...) asparagine glycans are attached at residues asparagine 441, asparagine 474, asparagine 477, asparagine 482, asparagine 511, asparagine 535, asparagine 554, and asparagine 594. Residue asparagine 631 is glycosylated (N-linked (GlcNAc...) asparagine). Asparagine 669, asparagine 679, asparagine 699, and asparagine 719 each carry an N-linked (GlcNAc...) asparagine glycan. Residues 752–772 (MILMIVMAAIGAFLLSLFCCF) traverse the membrane as a helical segment. The Cytoplasmic segment spans residues 773–1136 (YVYTLLKWRK…ADPTSQPSPA (364 aa)). The interval 786 to 819 (QQSTTGEKKRSPGRTSAGSRVRSSTSRSSTENGE) is disordered. The segment covering 799 to 815 (RTSAGSRVRSSTSRSST) has biased composition (low complexity). Phosphothreonine occurs at positions 830 and 838. In terms of domain architecture, Protein kinase spans 841–1123 (FDEENVLSRT…LEGCRVGPDV (283 aa)). Phosphotyrosine is present on residues tyrosine 915 and tyrosine 1010.

Belongs to the protein kinase superfamily. Ser/Thr protein kinase family.

The protein localises to the cell membrane. The catalysed reaction is L-seryl-[protein] + ATP = O-phospho-L-seryl-[protein] + ADP + H(+). The enzyme catalyses L-threonyl-[protein] + ATP = O-phospho-L-threonyl-[protein] + ADP + H(+). This chain is Probable LRR receptor-like serine/threonine-protein kinase At4g36180, found in Arabidopsis thaliana (Mouse-ear cress).